Reading from the N-terminus, the 232-residue chain is Pseudaminic acid cytidylyltransferase (232 aa).

This sequence belongs to the CMP-NeuNAc synthase family. Mg(2+) serves as cofactor.

The catalysed reaction is pseudaminate + CTP = CMP-pseudaminate + diphosphate. Catalyzes the final step in the biosynthesis of pseudaminic acid, a sialic-acid-like sugar that is used to modify flagellin. Mediates the activation of pseudaminic acid with CMP by forming CMP-pseudaminic acid. In Campylobacter jejuni subsp. jejuni serotype O:2 (strain ATCC 700819 / NCTC 11168), this protein is Pseudaminic acid cytidylyltransferase (pseF).